The following is a 458-amino-acid chain: Ribulose bisphosphate carboxylase large chain (458 aa).

At lysine 7 the chain carries N6,N6,N6-trimethyllysine. The substrate site is built by asparagine 116 and threonine 166. The active-site Proton acceptor is lysine 168. Residue lysine 170 coordinates substrate. Residues lysine 194, aspartate 196, and glutamate 197 each coordinate Mg(2+). Lysine 194 is subject to N6-carboxylysine. Histidine 287 serves as the catalytic Proton acceptor. The substrate site is built by arginine 288, histidine 320, and serine 372.

Belongs to the RuBisCO large chain family. Type I subfamily. In terms of assembly, heterohexadecamer of 8 large chains and 8 small chains; disulfide-linked. The disulfide link is formed within the large subunit homodimers. Mg(2+) serves as cofactor. In terms of processing, the disulfide bond which can form in the large chain dimeric partners within the hexadecamer appears to be associated with oxidative stress and protein turnover.

It is found in the plastid. Its subcellular location is the chloroplast. It catalyses the reaction 2 (2R)-3-phosphoglycerate + 2 H(+) = D-ribulose 1,5-bisphosphate + CO2 + H2O. It carries out the reaction D-ribulose 1,5-bisphosphate + O2 = 2-phosphoglycolate + (2R)-3-phosphoglycerate + 2 H(+). Functionally, ruBisCO catalyzes two reactions: the carboxylation of D-ribulose 1,5-bisphosphate, the primary event in carbon dioxide fixation, as well as the oxidative fragmentation of the pentose substrate in the photorespiration process. Both reactions occur simultaneously and in competition at the same active site. The chain is Ribulose bisphosphate carboxylase large chain from Gladiolus gueinzii (Coastal gladiolus).